The following is a 352-amino-acid chain: Chalcone synthase C (352 aa).

The active site involves cysteine 170.

It belongs to the thiolase-like superfamily. Chalcone/stilbene synthases family.

The catalysed reaction is (E)-4-coumaroyl-CoA + 3 malonyl-CoA + 3 H(+) = 2',4,4',6'-tetrahydroxychalcone + 3 CO2 + 4 CoA. It participates in secondary metabolite biosynthesis; flavonoid biosynthesis. Functionally, the primary product of this enzyme is 4,2',4',6'-tetrahydroxychalcone (also termed naringenin-chalcone or chalcone) which can under specific conditions spontaneously isomerize into naringenin. This is Chalcone synthase C (CHSC) from Ipomoea purpurea (Common morning glory).